Here is a 208-residue protein sequence, read N- to C-terminus: LexA repressor (208 aa).

Positions 29 to 49 (IREIGDSLNINSTSTVHNNIL) form a DNA-binding region, H-T-H motif. Active-site for autocatalytic cleavage activity residues include Ser-131 and Lys-168.

This sequence belongs to the peptidase S24 family. In terms of assembly, homodimer.

The catalysed reaction is Hydrolysis of Ala-|-Gly bond in repressor LexA.. Its function is as follows. Represses a number of genes involved in the response to DNA damage (SOS response), including recA and lexA. In the presence of single-stranded DNA, RecA interacts with LexA causing an autocatalytic cleavage which disrupts the DNA-binding part of LexA, leading to derepression of the SOS regulon and eventually DNA repair. The sequence is that of LexA repressor from Finegoldia magna (strain ATCC 29328 / DSM 20472 / WAL 2508) (Peptostreptococcus magnus).